The primary structure comprises 149 residues: Large ribosomal subunit protein bL9 (149 aa).

It belongs to the bacterial ribosomal protein bL9 family.

Binds to the 23S rRNA. In Glaesserella parasuis serovar 5 (strain SH0165) (Haemophilus parasuis), this protein is Large ribosomal subunit protein bL9.